The following is a 113-amino-acid chain: Immunoglobulin lambda variable 2-23 (113 aa).

Residues 1 to 19 (MAWALLLLTLLTQDTGSWA) form the signal peptide. Gln20 carries the post-translational modification Pyrrolidone carboxylic acid. Residues 20-44 (QSALTQPASVSGSPGQSITISCTGT) are framework-1. The 94-residue stretch at 20-113 (QSALTQPASV…EADYYCCSYA (94 aa)) folds into the Ig-like domain. Residues Cys41 and Cys109 are joined by a disulfide bond. The segment at 45–53 (SSDVGSYNL) is complementarity-determining-1. Positions 54-70 (VSWYQQHPGKAPKLMIY) are framework-2. The tract at residues 71 to 73 (EGS) is complementarity-determining-2. The disordered stretch occupies residues 73–92 (SKRPSGVSNRFSGSKSGNTA). Residues 74 to 109 (KRPSGVSNRFSGSKSGNTASLTISGLQAEDEADYYC) form a framework-3 region. A compositionally biased stretch (polar residues) spans 78 to 92 (GVSNRFSGSKSGNTA). Residues 110 to 113 (CSYA) are complementarity-determining-3.

In terms of assembly, immunoglobulins are composed of two identical heavy chains and two identical light chains; disulfide-linked.

It is found in the secreted. The protein localises to the cell membrane. Functionally, v region of the variable domain of immunoglobulin light chains that participates in the antigen recognition. Immunoglobulins, also known as antibodies, are membrane-bound or secreted glycoproteins produced by B lymphocytes. In the recognition phase of humoral immunity, the membrane-bound immunoglobulins serve as receptors which, upon binding of a specific antigen, trigger the clonal expansion and differentiation of B lymphocytes into immunoglobulins-secreting plasma cells. Secreted immunoglobulins mediate the effector phase of humoral immunity, which results in the elimination of bound antigens. The antigen binding site is formed by the variable domain of one heavy chain, together with that of its associated light chain. Thus, each immunoglobulin has two antigen binding sites with remarkable affinity for a particular antigen. The variable domains are assembled by a process called V-(D)-J rearrangement and can then be subjected to somatic hypermutations which, after exposure to antigen and selection, allow affinity maturation for a particular antigen. The protein is Immunoglobulin lambda variable 2-23 of Homo sapiens (Human).